The following is a 419-amino-acid chain: Putative actin-fragmin kinase DDB_G0279609 (419 aa).

Residues 73–94 (INNNNNSINNNNNNNNKNKNKN) form a disordered region.

Belongs to the protein kinase superfamily. AFK Ser/Thr protein kinase family.

The protein is Putative actin-fragmin kinase DDB_G0279609 of Dictyostelium discoideum (Social amoeba).